Consider the following 256-residue polypeptide: Geranylgeranylglyceryl phosphate synthase (256 aa).

The Mg(2+) site is built by aspartate 28 and serine 53. Residues 172-178 (YLEAGSG), 203-204 (GG), and 225-226 (GT) each bind sn-glycerol 1-phosphate.

Belongs to the GGGP/HepGP synthase family. Group II subfamily. Mg(2+) is required as a cofactor.

The protein localises to the cytoplasm. The enzyme catalyses sn-glycerol 1-phosphate + (2E,6E,10E)-geranylgeranyl diphosphate = sn-3-O-(geranylgeranyl)glycerol 1-phosphate + diphosphate. The protein operates within membrane lipid metabolism; glycerophospholipid metabolism. Functionally, prenyltransferase that catalyzes the transfer of the geranylgeranyl moiety of geranylgeranyl diphosphate (GGPP) to the C3 hydroxyl of sn-glycerol-1-phosphate (G1P). This reaction is the first ether-bond-formation step in the biosynthesis of archaeal membrane lipids. The chain is Geranylgeranylglyceryl phosphate synthase from Methanococcus maripaludis (strain C5 / ATCC BAA-1333).